The chain runs to 508 residues: Photosystem II CP47 reaction center protein (508 aa).

A run of 6 helical transmembrane segments spans residues 21-36 (SVHI…WAGS), 101-115 (IAFS…IWHW), 140-156 (GIHL…FGAF), 203-218 (IAAG…FHLS), 237-252 (VLSS…AFVV), and 457-472 (SFAL…HGAR).

Belongs to the PsbB/PsbC family. PsbB subfamily. As to quaternary structure, PSII is composed of 1 copy each of membrane proteins PsbA, PsbB, PsbC, PsbD, PsbE, PsbF, PsbH, PsbI, PsbJ, PsbK, PsbL, PsbM, PsbT, PsbX, PsbY, PsbZ, Psb30/Ycf12, at least 3 peripheral proteins of the oxygen-evolving complex and a large number of cofactors. It forms dimeric complexes. Requires Binds multiple chlorophylls. PSII binds additional chlorophylls, carotenoids and specific lipids. as cofactor.

The protein localises to the plastid membrane. One of the components of the core complex of photosystem II (PSII). It binds chlorophyll and helps catalyze the primary light-induced photochemical processes of PSII. PSII is a light-driven water:plastoquinone oxidoreductase, using light energy to abstract electrons from H(2)O, generating O(2) and a proton gradient subsequently used for ATP formation. The sequence is that of Photosystem II CP47 reaction center protein from Cuscuta reflexa (Southern Asian dodder).